The following is a 138-amino-acid chain: ATP synthase epsilon chain, chloroplastic (138 aa).

Belongs to the ATPase epsilon chain family. F-type ATPases have 2 components, CF(1) - the catalytic core - and CF(0) - the membrane proton channel. CF(1) has five subunits: alpha(3), beta(3), gamma(1), delta(1), epsilon(1). CF(0) has three main subunits: a, b and c.

It localises to the plastid. It is found in the chloroplast thylakoid membrane. Functionally, produces ATP from ADP in the presence of a proton gradient across the membrane. The polypeptide is ATP synthase epsilon chain, chloroplastic (Staurastrum punctulatum (Green alga)).